Here is a 441-residue protein sequence, read N- to C-terminus: tRNA modification GTPase MnmE (441 aa).

3 residues coordinate (6S)-5-formyl-5,6,7,8-tetrahydrofolate: R23, E81, and K121. One can recognise a TrmE-type G domain in the interval 218–363; the sequence is GFRVAIVGPP…LESWIAAFVS (146 aa). N228 provides a ligand contact to K(+). GTP contacts are provided by residues 228–233, 247–253, 272–275, and 326–329; these read NAGKSS, TDIAGTT, DTAG, and NKAD. Position 232 (S232) interacts with Mg(2+). 3 residues coordinate K(+): T247, I249, and T252. T253 provides a ligand contact to Mg(2+). K441 contacts (6S)-5-formyl-5,6,7,8-tetrahydrofolate.

Belongs to the TRAFAC class TrmE-Era-EngA-EngB-Septin-like GTPase superfamily. TrmE GTPase family. Homodimer. Heterotetramer of two MnmE and two MnmG subunits. K(+) is required as a cofactor.

Its subcellular location is the cytoplasm. Its function is as follows. Exhibits a very high intrinsic GTPase hydrolysis rate. Involved in the addition of a carboxymethylaminomethyl (cmnm) group at the wobble position (U34) of certain tRNAs, forming tRNA-cmnm(5)s(2)U34. This chain is tRNA modification GTPase MnmE, found in Hyphomonas neptunium (strain ATCC 15444).